A 386-amino-acid chain; its full sequence is Signal transduction histidine-protein kinase/phosphatase DegS (386 aa).

Residues 188–384 (KLSREIHDGP…TIIISIPITT (197 aa)) enclose the Histidine kinase domain. At His-194 the chain carries Phosphohistidine; by autocatalysis.

Post-translationally, autophosphorylated.

The protein localises to the cytoplasm. It carries out the reaction ATP + protein L-histidine = ADP + protein N-phospho-L-histidine.. Functionally, member of the two-component regulatory system DegS/DegU, which plays an important role in the transition growth phase. Acts as both a protein kinase that undergoes autophosphorylation and subsequently transfers the phosphate to DegU, and a protein phosphatase that dephosphorylates phospho-DegU. In Brevibacillus brevis (Bacillus brevis), this protein is Signal transduction histidine-protein kinase/phosphatase DegS (degS).